The following is a 94-amino-acid chain: Aspartyl/glutamyl-tRNA(Asn/Gln) amidotransferase subunit C (94 aa).

It belongs to the GatC family. In terms of assembly, heterotrimer of A, B and C subunits.

It carries out the reaction L-glutamyl-tRNA(Gln) + L-glutamine + ATP + H2O = L-glutaminyl-tRNA(Gln) + L-glutamate + ADP + phosphate + H(+). The catalysed reaction is L-aspartyl-tRNA(Asn) + L-glutamine + ATP + H2O = L-asparaginyl-tRNA(Asn) + L-glutamate + ADP + phosphate + 2 H(+). Allows the formation of correctly charged Asn-tRNA(Asn) or Gln-tRNA(Gln) through the transamidation of misacylated Asp-tRNA(Asn) or Glu-tRNA(Gln) in organisms which lack either or both of asparaginyl-tRNA or glutaminyl-tRNA synthetases. The reaction takes place in the presence of glutamine and ATP through an activated phospho-Asp-tRNA(Asn) or phospho-Glu-tRNA(Gln). The polypeptide is Aspartyl/glutamyl-tRNA(Asn/Gln) amidotransferase subunit C (Desulfitobacterium hafniense (strain DSM 10664 / DCB-2)).